A 428-amino-acid polypeptide reads, in one-letter code: Histone deacetylase 3 (428 aa).

The histone deacetylase stretch occupies residues 3 to 316; it reads KTVAYFYDPD…WTYETSLLVE (314 aa). 1D-myo-inositol 1,4,5,6-tetrakisphosphate contacts are provided by His-17, Gly-21, and Lys-25. His-135 is a catalytic residue. Zn(2+)-binding residues include Asp-170, His-172, and Asp-259. Arg-265 contributes to the 1D-myo-inositol 1,4,5,6-tetrakisphosphate binding site. 2 stretches are compositionally biased toward basic and acidic residues: residues 388-405 and 415-428; these read DRTD…ENYS and DGDH…DVEI. A disordered region spans residues 388-428; it reads DRTDEADAEERGPEENYSRPEAPNEFYDGDHDNDKESDVEI. Ser-424 bears the Phosphoserine mark.

It belongs to the histone deacetylase family. HD type 1 subfamily. In terms of assembly, interacts with HDAC7 and HDAC9. Interacts with DAXX, KDM4A, HDAC10 and DACH1. Found in a complex with NCOR1 and NCOR2. Component of the N-Cor repressor complex, at least composed of NCOR1, NCOR2, HDAC3, TBL1X, TBL1R, CORO2A and GPS2. Interacts with BCOR, MJD2A/JHDM3A, NRIP1, PRDM6 and SRY. Interacts with BTBD14B. Interacts with GLIS2. Interacts (via the DNA-binding domain) with NR2C1; the interaction recruits phosphorylated NR2C1 to PML bodies for sumoylation. Component of the Notch corepressor complex. Interacts with CBFA2T3 and NKAP. Interacts with APEX1; the interaction is not dependent on the acetylated status of APEX1. Interacts with ZMYND15. Interacts with SMRT/NCOR2 and BCL6 on DNA enhancer elements. Interacts with INSM1. Interacts with XBP1 isoform 1; the interaction occurs in endothelial cell (EC) under disturbed flow. Interacts (via C-terminus) with CCAR2 (via N-terminus). Interacts with and deacetylates MEF2D. Interacts with BEND3. Interacts with NKAPL. Interacts with DHX36; this interaction occurs in a RNA-dependent manner. Interacts weakly with CRY1; this interaction is enhanced in the presence of FBXL3. Interacts with FBXL3 and BMAL1. Interacts with NCOR1. Interacts with RARA. Interacts with SETD5. In terms of processing, sumoylated in vitro. Deubiquitinated on 'Lys-63'-linked ubiquitin chains by USP38; leading to a decreased level of histone acetylation.

The protein resides in the nucleus. The protein localises to the chromosome. It is found in the cytoplasm. Its subcellular location is the cytosol. It catalyses the reaction N(6)-acetyl-L-lysyl-[histone] + H2O = L-lysyl-[histone] + acetate. The enzyme catalyses N(6)-acetyl-L-lysyl-[protein] + H2O = L-lysyl-[protein] + acetate. The catalysed reaction is N(6)-(2E)-butenoyl-L-lysyl-[protein] + H2O = (2E)-2-butenoate + L-lysyl-[protein]. It carries out the reaction N(6)-(2-hydroxyisobutanoyl)-L-lysyl-[protein] + H2O = 2-hydroxy-2-methylpropanoate + L-lysyl-[protein]. It catalyses the reaction N(6)-[(S)-lactoyl]-L-lysyl-[protein] + H2O = (S)-lactate + L-lysyl-[protein]. With respect to regulation, inositol tetraphosphate (1D-myo-inositol 1,4,5,6-tetrakisphosphate) promotes the histone deacetylase activity by acting as an intermolecular glue between HDAC3 and NCOR2, thereby promoting its association with the N-Cor complex, a prerequisite for the histone deacetylase activity. In terms of biological role, histone deacetylase that catalyzes the deacetylation of lysine residues on the N-terminal part of the core histones (H2A, H2B, H3 and H4), and some other non-histone substrates. Histone deacetylation gives a tag for epigenetic repression and plays an important role in transcriptional regulation, cell cycle progression and developmental events. Histone deacetylases act via the formation of large multiprotein complexes, such as N-Cor repressor complex, which activate the histone deacetylase activity. Participates in the BCL6 transcriptional repressor activity by deacetylating the H3 'Lys-27' (H3K27) on enhancer elements, antagonizing EP300 acetyltransferase activity and repressing proximal gene expression. Acts as a molecular chaperone for shuttling phosphorylated NR2C1 to PML bodies for sumoylation. Contributes, together with XBP1 isoform 1, to the activation of NFE2L2-mediated HMOX1 transcription factor gene expression in a PI(3)K/mTORC2/Akt-dependent signaling pathway leading to endothelial cell (EC) survival under disturbed flow/oxidative stress. Regulates both the transcriptional activation and repression phases of the circadian clock in a deacetylase activity-independent manner. During the activation phase, promotes the accumulation of ubiquitinated BMAL1 at the E-boxes and during the repression phase, blocks FBXL3-mediated CRY1/2 ubiquitination and promotes the interaction of CRY1 and BMAL1. The NCOR1-HDAC3 complex regulates the circadian expression of the core clock gene BMAL1 and the genes involved in lipid metabolism in the liver. Also functions as deacetylase for non-histone targets, such as KAT5, MEF2D, MAPK14, RARA and STAT3. Serves as a corepressor of RARA, mediating its deacetylation and repression, leading to inhibition of RARE DNA element binding. In addition to protein deacetylase activity, also acts as a protein-lysine deacylase by recognizing other acyl groups: catalyzes removal of (2E)-butenoyl (crotonyl), lactoyl (lactyl) and 2-hydroxyisobutanoyl (2-hydroxyisobutyryl) acyl groups from lysine residues, leading to protein decrotonylation, delactylation and de-2-hydroxyisobutyrylation, respectively. Catalyzes decrotonylation of MAPRE1/EB1. Mediates delactylation NBN/NBS1, thereby inhibiting DNA double-strand breaks (DSBs) via homologous recombination (HR). The protein is Histone deacetylase 3 of Mus musculus (Mouse).